Consider the following 328-residue polypeptide: Lipoyl synthase (328 aa).

[4Fe-4S] cluster is bound by residues Cys56, Cys61, Cys67, Cys82, Cys86, Cys89, and Ser293. The Radical SAM core domain maps to Trp68–Ser282.

The protein belongs to the radical SAM superfamily. Lipoyl synthase family. [4Fe-4S] cluster is required as a cofactor.

The protein resides in the cytoplasm. It catalyses the reaction [[Fe-S] cluster scaffold protein carrying a second [4Fe-4S](2+) cluster] + N(6)-octanoyl-L-lysyl-[protein] + 2 oxidized [2Fe-2S]-[ferredoxin] + 2 S-adenosyl-L-methionine + 4 H(+) = [[Fe-S] cluster scaffold protein] + N(6)-[(R)-dihydrolipoyl]-L-lysyl-[protein] + 4 Fe(3+) + 2 hydrogen sulfide + 2 5'-deoxyadenosine + 2 L-methionine + 2 reduced [2Fe-2S]-[ferredoxin]. Its pathway is protein modification; protein lipoylation via endogenous pathway; protein N(6)-(lipoyl)lysine from octanoyl-[acyl-carrier-protein]: step 2/2. Catalyzes the radical-mediated insertion of two sulfur atoms into the C-6 and C-8 positions of the octanoyl moiety bound to the lipoyl domains of lipoate-dependent enzymes, thereby converting the octanoylated domains into lipoylated derivatives. In Frankia alni (strain DSM 45986 / CECT 9034 / ACN14a), this protein is Lipoyl synthase.